A 393-amino-acid polypeptide reads, in one-letter code: MQQTKKLTQSDIIIAVMSGPFLQRGEPALISKWYRTKMALTNGVDLVVELPYAFATQKAETFANGAISILNALGVSEICFGSEDGQAENFYNTIAIQKNEEETFNRLVKQFMNAGNSYAKATSEAFLHILPPEKNVDMSQPNNILGLQYIKAILLQNSSMQAQTIKRFASHYHDETFHDQHIASATSIRKQLFNENSSSTTIEPFIPKMTASLLENYKQNYGTLHNWEKYFSFFKYKLMTMSSEDLQHIYEMEEGLEHRILSKIQNSSSFYSFMEALKTKRYTWTRLQRACTHILTNTTKEEIHKANIEQHAPYIRLLGMSQKGQTYLSRNKKKIELPILTHTKTFEHPTLDIERKSNAVYFSIMQEPLRTQLLKQDATHHPIRYDEITKKFL.

ATP-binding residues include Gly81, Asn142, and Arg167.

Belongs to the TmcAL family.

It localises to the cytoplasm. It catalyses the reaction cytidine(34) in elongator tRNA(Met) + acetate + ATP = N(4)-acetylcytidine(34) in elongator tRNA(Met) + AMP + diphosphate. In terms of biological role, catalyzes the formation of N(4)-acetylcytidine (ac(4)C) at the wobble position of elongator tRNA(Met), using acetate and ATP as substrates. First activates an acetate ion to form acetyladenylate (Ac-AMP) and then transfers the acetyl group to tRNA to form ac(4)C34. The polypeptide is tRNA(Met) cytidine acetate ligase (Bacillus mycoides (strain KBAB4) (Bacillus weihenstephanensis)).